A 405-amino-acid chain; its full sequence is Proline-rich P65 protein (405 aa).

The tract at residues 1 to 58 (MDINKPGWNQSDQQATAYDPNQQQYYGDGSTYYDPDQAVDPNQAYYPDPNTYPDAAAY) is disordered. The segment covering 7–25 (GWNQSDQQATAYDPNQQQY) has biased composition (polar residues). 12 tandem repeats follow at residues 40-45 (DPNQAY), 75-80 (DPNQAY), 83-87 (DPNAY), 89-93 (DPNAY), 95-99 (DPNAY), 101-105 (DPNAY), 107-111 (DPNAY), 119-123 (DPNAY), 140-145 (DPNQAY), 148-152 (DPNAY), 154-158 (DPNAY), and 168-172 (DPNAY). The tract at residues 40 to 172 (DPNQAYYPDP…YVTSTDPNAY (133 aa)) is 12 X 5 AA repeats of D-P-N-Q-A-Y.

Post-translationally, the N-terminus is blocked.

It is found in the cell membrane. The protein is Proline-rich P65 protein (p65) of Mycoplasma pneumoniae (strain ATCC 29342 / M129 / Subtype 1) (Mycoplasmoides pneumoniae).